The sequence spans 268 residues: Tryptophan synthase alpha chain (268 aa).

Active-site proton acceptor residues include E49 and D60.

This sequence belongs to the TrpA family. Tetramer of two alpha and two beta chains.

The enzyme catalyses (1S,2R)-1-C-(indol-3-yl)glycerol 3-phosphate + L-serine = D-glyceraldehyde 3-phosphate + L-tryptophan + H2O. It functions in the pathway amino-acid biosynthesis; L-tryptophan biosynthesis; L-tryptophan from chorismate: step 5/5. Functionally, the alpha subunit is responsible for the aldol cleavage of indoleglycerol phosphate to indole and glyceraldehyde 3-phosphate. This chain is Tryptophan synthase alpha chain, found in Escherichia coli (strain 55989 / EAEC).